Consider the following 414-residue polypeptide: 25-hydroxycholesterol 7-alpha-hydroxylase (414 aa).

Cys-354 contacts heme.

The protein belongs to the cytochrome P450 family. It depends on heme as a cofactor. As to expression, highly expressed in brain; also expressed in liver and kidney.

The protein localises to the endoplasmic reticulum membrane. The protein resides in the microsome membrane. The enzyme catalyses 25-hydroxycholesterol + reduced [NADPH--hemoprotein reductase] + O2 = 7alpha,25-dihydroxycholesterol + oxidized [NADPH--hemoprotein reductase] + H2O + H(+). The catalysed reaction is (25R)-cholest-5-ene-3beta,26-diol + reduced [NADPH--hemoprotein reductase] + O2 = (25R)-cholest-5-en-3beta,7alpha,26-triol + oxidized [NADPH--hemoprotein reductase] + H2O + H(+). It participates in lipid metabolism; bile acid biosynthesis. Oxysterol 7alpha-hydroxylase that mediates formation of 7-alpha,25-dihydroxycholesterol (7-alpha,25-OHC) from 25-hydroxycholesterol. Plays a key role in cell positioning and movement in lymphoid tissues: 7-alpha,25-dihydroxycholesterol (7-alpha,25-OHC) acts as a ligand for the G protein-coupled receptor GPR183/EBI2, a chemotactic receptor for a number of lymphoid cells. The chain is 25-hydroxycholesterol 7-alpha-hydroxylase (Cyp7b1) from Rattus norvegicus (Rat).